A 279-amino-acid polypeptide reads, in one-letter code: 3-methyl-2-oxobutanoate hydroxymethyltransferase (279 aa).

Residues aspartate 44 and aspartate 83 each contribute to the Mg(2+) site. 3-methyl-2-oxobutanoate contacts are provided by residues 44-45 (DS), aspartate 83, and lysine 113. Glutamate 115 contributes to the Mg(2+) binding site. Glutamate 182 (proton acceptor) is an active-site residue.

This sequence belongs to the PanB family. Homodecamer; pentamer of dimers. Mg(2+) serves as cofactor.

Its subcellular location is the cytoplasm. The enzyme catalyses 3-methyl-2-oxobutanoate + (6R)-5,10-methylene-5,6,7,8-tetrahydrofolate + H2O = 2-dehydropantoate + (6S)-5,6,7,8-tetrahydrofolate. It participates in cofactor biosynthesis; (R)-pantothenate biosynthesis; (R)-pantoate from 3-methyl-2-oxobutanoate: step 1/2. Catalyzes the reversible reaction in which hydroxymethyl group from 5,10-methylenetetrahydrofolate is transferred onto alpha-ketoisovalerate to form ketopantoate. The polypeptide is 3-methyl-2-oxobutanoate hydroxymethyltransferase (Dehalococcoides mccartyi (strain ATCC BAA-2100 / JCM 16839 / KCTC 5957 / BAV1)).